Reading from the N-terminus, the 261-residue chain is Undecaprenyl-diphosphatase (261 aa).

Helical transmembrane passes span 9–31 (ALLL…GHLT), 46–66 (FLKT…LLLY), 80–100 (IAVA…LIKG), 102–122 (ILGN…VLLF), 137–157 (ALPL…ALFP), 180–200 (AEFS…YDLW), 209–229 (GGWS…LVTV), and 240–260 (GFRP…FFFL).

It belongs to the UppP family.

It localises to the cell inner membrane. It catalyses the reaction di-trans,octa-cis-undecaprenyl diphosphate + H2O = di-trans,octa-cis-undecaprenyl phosphate + phosphate + H(+). Functionally, catalyzes the dephosphorylation of undecaprenyl diphosphate (UPP). Confers resistance to bacitracin. The polypeptide is Undecaprenyl-diphosphatase (Thermus thermophilus (strain ATCC 27634 / DSM 579 / HB8)).